The sequence spans 141 residues: Large ribosomal subunit protein uL11 (141 aa).

It belongs to the universal ribosomal protein uL11 family. In terms of assembly, part of the ribosomal stalk of the 50S ribosomal subunit. Interacts with L10 and the large rRNA to form the base of the stalk. L10 forms an elongated spine to which L12 dimers bind in a sequential fashion forming a multimeric L10(L12)X complex. Post-translationally, one or more lysine residues are methylated.

Functionally, forms part of the ribosomal stalk which helps the ribosome interact with GTP-bound translation factors. This is Large ribosomal subunit protein uL11 from Synechococcus sp. (strain JA-2-3B'a(2-13)) (Cyanobacteria bacterium Yellowstone B-Prime).